The primary structure comprises 263 residues: 3-methyl-2-oxobutanoate hydroxymethyltransferase (263 aa).

Positions 44 and 83 each coordinate Mg(2+). 3-methyl-2-oxobutanoate-binding positions include 44–45 (DS), Asp83, and Lys112. Glu114 is a binding site for Mg(2+). Glu181 functions as the Proton acceptor in the catalytic mechanism.

This sequence belongs to the PanB family. As to quaternary structure, homodecamer; pentamer of dimers. It depends on Mg(2+) as a cofactor.

It localises to the cytoplasm. It carries out the reaction 3-methyl-2-oxobutanoate + (6R)-5,10-methylene-5,6,7,8-tetrahydrofolate + H2O = 2-dehydropantoate + (6S)-5,6,7,8-tetrahydrofolate. It participates in cofactor biosynthesis; (R)-pantothenate biosynthesis; (R)-pantoate from 3-methyl-2-oxobutanoate: step 1/2. Functionally, catalyzes the reversible reaction in which hydroxymethyl group from 5,10-methylenetetrahydrofolate is transferred onto alpha-ketoisovalerate to form ketopantoate. This Nitrosospira multiformis (strain ATCC 25196 / NCIMB 11849 / C 71) protein is 3-methyl-2-oxobutanoate hydroxymethyltransferase.